Here is a 413-residue protein sequence, read N- to C-terminus: Serine hydroxymethyltransferase (413 aa).

(6S)-5,6,7,8-tetrahydrofolate-binding positions include Leu-117 and 121 to 123 (GHL). Lys-226 carries the post-translational modification N6-(pyridoxal phosphate)lysine. 349–351 (SPF) contributes to the (6S)-5,6,7,8-tetrahydrofolate binding site.

It belongs to the SHMT family. As to quaternary structure, homodimer. Pyridoxal 5'-phosphate serves as cofactor.

The protein localises to the cytoplasm. It carries out the reaction (6R)-5,10-methylene-5,6,7,8-tetrahydrofolate + glycine + H2O = (6S)-5,6,7,8-tetrahydrofolate + L-serine. Its pathway is one-carbon metabolism; tetrahydrofolate interconversion. The protein operates within amino-acid biosynthesis; glycine biosynthesis; glycine from L-serine: step 1/1. Functionally, catalyzes the reversible interconversion of serine and glycine with tetrahydrofolate (THF) serving as the one-carbon carrier. This reaction serves as the major source of one-carbon groups required for the biosynthesis of purines, thymidylate, methionine, and other important biomolecules. Also exhibits THF-independent aldolase activity toward beta-hydroxyamino acids, producing glycine and aldehydes, via a retro-aldol mechanism. This Pelobacter propionicus (strain DSM 2379 / NBRC 103807 / OttBd1) protein is Serine hydroxymethyltransferase.